Reading from the N-terminus, the 495-residue chain is tRNA modification GTPase MnmE (495 aa).

Residues Arg-28, Glu-89, and Lys-128 each coordinate (6S)-5-formyl-5,6,7,8-tetrahydrofolate. In terms of domain architecture, TrmE-type G spans 223–417; the sequence is GVRIVLGGCP…LRAQTLHLLH (195 aa). Asn-233 is a K(+) binding site. GTP is bound by residues 233–238, 252–258, and 277–280; these read NAGKSS, SSVPGTT, and DTAG. Ser-237 lines the Mg(2+) pocket. K(+)-binding residues include Ser-252, Val-254, and Thr-257. Thr-258 provides a ligand contact to Mg(2+). Lys-495 serves as a coordination point for (6S)-5-formyl-5,6,7,8-tetrahydrofolate.

Belongs to the TRAFAC class TrmE-Era-EngA-EngB-Septin-like GTPase superfamily. TrmE GTPase family. Homodimer. Heterotetramer of two MnmE and two MnmG subunits. The cofactor is K(+).

The protein resides in the cytoplasm. In terms of biological role, exhibits a very high intrinsic GTPase hydrolysis rate. Involved in the addition of a carboxymethylaminomethyl (cmnm) group at the wobble position (U34) of certain tRNAs, forming tRNA-cmnm(5)s(2)U34. The protein is tRNA modification GTPase MnmE of Treponema pallidum (strain Nichols).